A 562-amino-acid polypeptide reads, in one-letter code: Catalase T (562 aa).

Active-site residues include His-64 and Asn-137. Tyr-351 lines the heme pocket.

The protein belongs to the catalase family. Homotetramer. Heme is required as a cofactor.

The protein localises to the cytoplasm. The enzyme catalyses 2 H2O2 = O2 + 2 H2O. Its function is as follows. Occurs in almost all aerobically respiring organisms and serves to protect cells from the toxic effects of hydrogen peroxide. The sequence is that of Catalase T (CTT1) from Saccharomyces cerevisiae (strain ATCC 204508 / S288c) (Baker's yeast).